Consider the following 515-residue polypeptide: Fatty acyl-CoA reductase 1 (515 aa).

Topologically, residues 1–465 are cytoplasmic; the sequence is MVSIPEYYEG…ARKHLNKLRN (465 aa). The tract at residues 451–507 is necessary and sufficient for PEX19-mediated localization into peroxisome membrane; it reads SGLPAARKHLNKLRNIRYGFNTILVILIWRIFIARSQMARNIWYFVVSLCYKFLSYF. Residues 466–483 form a helical membrane-spanning segment; the sequence is IRYGFNTILVILIWRIFI. At 484–515 the chain is on the peroxisomal side; it reads ARSQMARNIWYFVVSLCYKFLSYFRASSTMRY.

Belongs to the fatty acyl-CoA reductase family. As to quaternary structure, interacts with PEX19; PEX19 mediates the targeting of FAR1 to peroxisomes. As to expression, widely expressed. Expressed in all tissues examined. Highest expression seen in preputial gland. Expressed in the brain where large quantities of ether lipids are synthesized.

The protein resides in the peroxisome membrane. The catalysed reaction is a long-chain fatty acyl-CoA + 2 NADPH + 2 H(+) = a long-chain primary fatty alcohol + 2 NADP(+) + CoA. The enzyme catalyses hexadecanoyl-CoA + 2 NADPH + 2 H(+) = hexadecan-1-ol + 2 NADP(+) + CoA. It catalyses the reaction octadecanoyl-CoA + 2 NADPH + 2 H(+) = octadecan-1-ol + 2 NADP(+) + CoA. It carries out the reaction (9Z)-octadecenoyl-CoA + 2 NADPH + 2 H(+) = (9Z)-octadecen-1-ol + 2 NADP(+) + CoA. The catalysed reaction is (9Z,12Z)-octadecadienoyl-CoA + 2 NADPH + 2 H(+) = (9Z,12Z)-octadecadien-1-ol + 2 NADP(+) + CoA. The enzyme catalyses eicosanoyl-CoA + 2 NADPH + 2 H(+) = eicosan-1-ol + 2 NADP(+) + CoA. It catalyses the reaction 16-methylheptadecanoyl-CoA + 2 NADPH + 2 H(+) = 16-methylheptadecan-1-ol + 2 NADP(+) + CoA. It carries out the reaction 18-methylnonadecanoyl-CoA + 2 NADPH + 2 H(+) = 18-methylnonadecan-1-ol + 2 NADP(+) + CoA. Its function is as follows. Catalyzes the reduction of saturated and unsaturated C16 or C18 fatty acyl-CoA to fatty alcohols. It plays an essential role in the production of ether lipids/plasmalogens which synthesis requires fatty alcohols. In parallel, it is also required for wax monoesters production since fatty alcohols also constitute a substrate for their synthesis. The chain is Fatty acyl-CoA reductase 1 from Mus musculus (Mouse).